Reading from the N-terminus, the 1069-residue chain is ISWI chromatin-remodeling complex ATPase CHR17 (1069 aa).

Basic and acidic residues predominate over residues Met-1–Ser-10. Disordered regions lie at residues Met-1 to Gln-93 and Phe-136 to Leu-168. 2 stretches are compositionally biased toward acidic residues: residues Tyr-15–Glu-37 and Ser-45–Lys-78. Residues Ala-79–Gln-93 are compositionally biased toward basic and acidic residues. A compositionally biased stretch (basic residues) spans Lys-146–Ser-156. A Helicase ATP-binding domain is found at Ile-206 to Glu-371. Residue Asp-219–Thr-226 participates in ATP binding. The short motif at Asp-322–His-325 is the DEAH box element. Positions Leu-499–Ala-650 constitute a Helicase C-terminal domain. 2 SANT domains span residues Glu-845–Lys-897 and Gln-946–Ile-1007. The disordered stretch occupies residues Glu-1016–Lys-1069. The span at Lys-1032–Ser-1051 shows a compositional bias: polar residues. Residues Leu-1059 to Lys-1069 show a composition bias toward basic and acidic residues.

The protein belongs to the SNF2/RAD54 helicase family. ISWI subfamily. Interacts with RLT1. Binds to FGT1. In terms of tissue distribution, highly expressed in growing tissues such as inflorescence and flower meristems, young leaves and floral organs. Expressed in roots, rosette and cauline leaves, stems, flowers, inflorescences and siliques.

The protein resides in the nucleus. Its function is as follows. Possesses intrinsic ATP-dependent nucleosome-remodeling activity. Constitutes the catalytic subunit of several complexes capable of forming ordered nucleosome arrays on chromatin. Involved in the formation of nucleosome distribution patterns. Required for the maintenance of the plant vegetative phase. In association with RLT1 or RLT2 may prevent the early activation of the vegetative-to-reproductive transition by regulating key genes that contribute to flower timing, such as FT, SEP1, SEP3, AGL8/FUL, SOC1 and FLC. Necessary to acquire heat stress (HS) memory. The polypeptide is ISWI chromatin-remodeling complex ATPase CHR17 (Arabidopsis thaliana (Mouse-ear cress)).